The following is a 147-amino-acid chain: UPF0306 protein YPTB0506 (147 aa).

The protein belongs to the UPF0306 family.

In Yersinia pseudotuberculosis serotype I (strain IP32953), this protein is UPF0306 protein YPTB0506.